Here is a 144-residue protein sequence, read N- to C-terminus: Putative RNase YutE (144 aa).

Arg96 is a catalytic residue. Residues 96-103 (RKTLVQQY) carry the RX(4)HXY motif motif.

It belongs to the HepT RNase toxin family. Homodimer, probably forms a complex with cognate antitoxin YutD.

Its function is as follows. Probable toxic component of a putative type VII toxin-antitoxin (TA) system, probably an RNase. Probably neutralized by cognate antitoxin YutD. This Bacillus subtilis (strain 168) protein is Putative RNase YutE (yutE).